Consider the following 365-residue polypeptide: Potassium channel subfamily K member 9 (365 aa).

Topologically, residues Met1 to Thr8 are cytoplasmic. Residues Leu9–Leu29 form a helical membrane-spanning segment. Residues Glu30–Ile88 lie on the Extracellular side of the membrane. N-linked (GlcNAc...) asparagine glycosylation occurs at Asn53. The pore-forming intramembrane region spans Thr89–Pro101. Residues Thr93, Ile94, Gly95, and Tyr96 each contribute to the K(+) site. The selectivity filter 1 stretch occupies residues Thr93–His98. Residues Gly102–Lys107 lie on the Extracellular side of the membrane. A helical transmembrane segment spans residues Ala108–Leu128. Residues Gly129–Asn158 are Cytoplasmic-facing. The chain crosses the membrane as a helical span at residues Met159–Ser179. The Extracellular portion of the chain corresponds to Gln180–Phe194. The segment at residues Ile195–Ala207 is an intramembrane region (pore-forming). K(+) is bound by residues Thr199, Ile200, Gly201, and Phe202. Residues Thr199–Asp204 are selectivity filter 2. Residues Leu208–Pro218 are Extracellular-facing. The helical transmembrane segment at Phe219–Leu239 threads the bilayer. Over Asn240–Val365 the chain is Cytoplasmic. The X-gate stretch occupies residues Val243 to Thr248.

It belongs to the two pore domain potassium channel (TC 1.A.1.8) family. As to quaternary structure, homodimer. Heterodimer with KCNK1. Heterodimer with KCNK3. In terms of tissue distribution, highly expressed in the brain.

It is found in the cell membrane. The protein resides in the mitochondrion inner membrane. It localises to the cell projection. The protein localises to the dendrite. The enzyme catalyses K(+)(in) = K(+)(out). It catalyses the reaction Na(+)(in) = Na(+)(out). With respect to regulation, inhibited by extracellular acidification. K(+) channel that conducts voltage-dependent outward rectifying currents upon membrane depolarization. Voltage sensing is coupled to K(+) electrochemical gradient in an 'ion flux gating' mode where outward but not inward ion flow opens the gate. Changes ion selectivity and becomes permeable to Na(+) ions in response to extracellular acidification. Protonation of the pH sensor His-98 stabilizes C-type inactivation conformation likely converting the channel from outward K(+)-conducting, to inward Na(+)-conducting to nonconductive state. Homo- and heterodimerizes to form functional channels with distinct regulatory and gating properties. Allows K(+) currents with fast-gating kinetics important for the repolarization and hyperpolarization phases of action potentials. In granule neurons, hyperpolarizes the resting membrane potential to limit intrinsic neuronal excitability, but once the action potential threshold is reached, supports high-frequency action potential firing and increased neuronal excitability. Homomeric and/or heteromeric KCNK3:KCNK9 channels operate in cerebellar granule cells, whereas heteromeric KCNK1:KCNK9 enables currents in hippocampal dentate gyrus granule neurons. Dispensable for central chemosensory respiration i.e. breathing controlled by brainstem CO2/pH, it rather conducts pH-sensitive currents and controls the firing rate of serotonergic raphe neurons involved in potentiation of the respiratory chemoreflex. In retinal ganglion cells, mediates outward rectifying currents that regulate action potentials in response to acidification of the synaptic cleft. Involved in transmission of image-forming and nonimage-forming visual information in the retina. In adrenal gland, contributes to the maintenance of a hyperpolarized resting membrane potential of aldosterone-producing cells at zona glomerulosa and limits aldosterone release as part of a regulatory mechanism that controls arterial blood pressure and electrolyte homeostasis. The chain is Potassium channel subfamily K member 9 (KCNK9) from Cavia porcellus (Guinea pig).